Here is a 257-residue protein sequence, read N- to C-terminus: Small ribosomal subunit protein uS15m (257 aa).

The transit peptide at methionine 1–proline 57 directs the protein to the mitochondrion. The disordered stretch occupies residues lysine 228–asparagine 257. Residues alanine 234–proline 243 show a composition bias toward basic and acidic residues.

Belongs to the universal ribosomal protein uS15 family. In terms of assembly, component of the mitochondrial ribosome small subunit (28S) which comprises a 12S rRNA and about 30 distinct proteins. Interacts with METTL17.

The protein localises to the mitochondrion matrix. In Rattus norvegicus (Rat), this protein is Small ribosomal subunit protein uS15m (Mrps15).